The chain runs to 616 residues: Proline--tRNA ligase (616 aa).

This sequence belongs to the class-II aminoacyl-tRNA synthetase family. ProS type 1 subfamily. Homodimer.

Its subcellular location is the cytoplasm. It catalyses the reaction tRNA(Pro) + L-proline + ATP = L-prolyl-tRNA(Pro) + AMP + diphosphate. In terms of biological role, catalyzes the attachment of proline to tRNA(Pro) in a two-step reaction: proline is first activated by ATP to form Pro-AMP and then transferred to the acceptor end of tRNA(Pro). As ProRS can inadvertently accommodate and process non-cognate amino acids such as alanine and cysteine, to avoid such errors it has two additional distinct editing activities against alanine. One activity is designated as 'pretransfer' editing and involves the tRNA(Pro)-independent hydrolysis of activated Ala-AMP. The other activity is designated 'posttransfer' editing and involves deacylation of mischarged Ala-tRNA(Pro). The misacylated Cys-tRNA(Pro) is not edited by ProRS. This chain is Proline--tRNA ligase, found in Streptococcus mutans serotype c (strain ATCC 700610 / UA159).